The chain runs to 315 residues: Cysteine proteinase 1 (315 aa).

The N-terminal stretch at 1 to 13 (MFTFILMFYIGYG) is a signal peptide. Positions 14–93 (IDFNTWVANN…KGEVRYLNIQ (80 aa)) are cleaved as a propeptide — activation peptide. 2 cysteine pairs are disulfide-bonded: Cys115–Cys161 and Cys152–Cys193. The active site involves Cys118. Residues His259 and Asn279 contribute to the active site.

Belongs to the peptidase C1 family.

It localises to the lysosome. Inhibited by cysteine protease inhibitors ICP1 and ICP2. In terms of biological role, cysteine protease which degrades matrix proteins such as collagen, laminin and fibronectin and thus is involved in the destruction of human tissue. Can abolish adhesion. May play an important role in pathogenicity. This chain is Cysteine proteinase 1, found in Entamoeba histolytica (strain ATCC 30459 / HM-1:IMSS / ABRM).